Consider the following 94-residue polypeptide: Neurotoxin LmNaTx45.2 (94 aa).

The first 18 residues, 1–18 (MKLAILSLFLVFQIGVES), serve as a signal peptide directing secretion. The LCN-type CS-alpha/beta domain maps to 20-86 (KNGFALDHYG…IGDSRKNYCD (67 aa)). 4 disulfide bridges follow: C34–C85, C44–C63, C48–C65, and C59–C85.

The protein belongs to the long (4 C-C) scorpion toxin superfamily. Sodium channel inhibitor family. Beta subfamily. In terms of tissue distribution, expressed by the venom gland.

The protein resides in the secreted. Functionally, binds voltage-independently at site-4 of sodium channels (Nav) and shift the voltage of activation toward more negative potentials thereby affecting sodium channel activation and promoting spontaneous and repetitive firing. This chain is Neurotoxin LmNaTx45.2, found in Lychas mucronatus (Chinese swimming scorpion).